Consider the following 67-residue polypeptide: MPKMKTKSSAKKRFKITASGKVLAAAAGKRHGMIKRSNKFIRNARGTMVLAEADGKKVIKNYLPNGL.

The protein belongs to the bacterial ribosomal protein bL35 family.

This is Large ribosomal subunit protein bL35 from Allorhizobium ampelinum (strain ATCC BAA-846 / DSM 112012 / S4) (Agrobacterium vitis (strain S4)).